The following is a 1497-amino-acid chain: Dual oxidase 1 (1497 aa).

A signal peptide spans 1–21 (MRSKHVLYIAILFSSIFGGKG). The Extracellular portion of the chain corresponds to 22–587 (IQQNEEFQRY…MQSTYWTDND (566 aa)). The tract at residues 26–590 (EEFQRYDGWY…TYWTDNDTTY (565 aa)) is peroxidase-like; mediates peroxidase activity. 4 N-linked (GlcNAc...) asparagine glycosylation sites follow: N66, N305, N567, and N586. Residues 588-608 (TTYVFTLIGLACVPLICYGIG) form a helical membrane-spanning segment. Residues 609-986 (RYLVNRRIAI…VSAFLETYRQ (378 aa)) are Cytoplasmic-facing. EF-hand domains follow at residues 817–852 (ANNE…FVNA) and 853–888 (PQKQ…LNQT). The chain crosses the membrane as a helical span at residues 987–1007 (HVFIVFCFVAINLVLFFERFW). Residues 1008–1024 (HYRYMAENRDLRRVMGA) are Extracellular-facing. The chain crosses the membrane as a helical span at residues 1025–1045 (GIAITRGAAGALSFCMALILL). The region spanning 1030–1210 (RGAAGALSFC…FVIDRIIGLM (181 aa)) is the Ferric oxidoreductase domain. Topologically, residues 1046–1068 (TVCRNIITLLRETVIAQYIPFDS) are cytoplasmic. The chain crosses the membrane as a helical span at residues 1069–1089 (AIAFHKIVALFAAFWATLHTV). Over 1090–1134 (GHCVNFYHVGTQSQEGLACLFQEAFFGSNFLPSISYWFFSTITGL) the chain is Extracellular. The helical transmembrane segment at 1135–1155 (TGIALVAVMCIIYVFALPCFI) threads the bilayer. At 1156-1163 (KRAYHAFR) the chain is on the cytoplasmic side. A helical membrane pass occupies residues 1164-1184 (LTHLLNIAFYALTLLHGLPKL). Topologically, residues 1185–1189 (LDSPK) are extracellular. A helical membrane pass occupies residues 1190-1210 (FGYYVVGPIVLFVIDRIIGLM). The 108-residue stretch at 1211-1318 (QYYKKLEIVN…KGPYGDGNQE (108 aa)) folds into the FAD-binding FR-type domain. Over 1211 to 1497 (QYYKKLEIVN…PSFAHRFETF (287 aa)) the chain is Cytoplasmic.

The protein in the N-terminal section; belongs to the peroxidase family. In terms of assembly, interacts with doxa-1 and tsp-15. Interacts with rho-1. As to expression, expressed in hypodermal cells.

It localises to the membrane. The catalysed reaction is NADH + O2 + H(+) = H2O2 + NAD(+). The enzyme catalyses NADPH + O2 + H(+) = H2O2 + NADP(+). With respect to regulation, peroxidase activity is inhibited by aminobenzohydrazide. Plays a role in cuticle biogenesis. In complex with doxa-1 and tsp-15, produces reactive oxygen species (ROS), which are probably used by mlt-7 for tyrosine cross-linking, thus stabilizing cuticular extracellular matrix. May regulate the production of ROS by playing a role in modulating proline catabolism. Required in combination with mlt-7 for correct formation of cross-links in cuticle collagens. Association with the GTPase rho-1 promotes ROS production and this interaction may be modulated by memo-1, in order to control the oxidative stress response and longevity. The chain is Dual oxidase 1 from Caenorhabditis elegans.